Reading from the N-terminus, the 294-residue chain is NAD kinase (294 aa).

Catalysis depends on Asp72, which acts as the Proton acceptor. Residues 72 to 73 (DG), 146 to 147 (ND), Arg157, Arg174, Asp176, 187 to 192 (TAYSLS), and Gln247 each bind NAD(+).

The protein belongs to the NAD kinase family. A divalent metal cation serves as cofactor.

The protein localises to the cytoplasm. It catalyses the reaction NAD(+) + ATP = ADP + NADP(+) + H(+). In terms of biological role, involved in the regulation of the intracellular balance of NAD and NADP, and is a key enzyme in the biosynthesis of NADP. Catalyzes specifically the phosphorylation on 2'-hydroxyl of the adenosine moiety of NAD to yield NADP. This chain is NAD kinase, found in Marinobacter nauticus (strain ATCC 700491 / DSM 11845 / VT8) (Marinobacter aquaeolei).